The primary structure comprises 82 residues: UPF0337 protein PP_2059 (82 aa).

This sequence belongs to the UPF0337 (CsbD) family.

The protein is UPF0337 protein PP_2059 of Pseudomonas putida (strain ATCC 47054 / DSM 6125 / CFBP 8728 / NCIMB 11950 / KT2440).